A 688-amino-acid polypeptide reads, in one-letter code: G protein-coupled receptor kinase 3 (688 aa).

Residues 1-190 (MADLEAVLAD…ELNIHLSMND (190 aa)) form an N-terminal region. The region spanning 54 to 175 (TFDKIFNQKI…MESEKFTRFC (122 aa)) is the RGS domain. The 263-residue stretch at 191–453 (FSVHRIIGRG…ARELKEHIFF (263 aa)) folds into the Protein kinase domain. ATP-binding positions include 197–205 (IGRGGFGEV) and lysine 220. Residue aspartate 317 is the Proton acceptor of the active site. Residues 454–521 (KGIDWQYVYL…MISERWQQEV (68 aa)) form the AGC-kinase C-terminal domain. The PH domain occupies 558–652 (DCIMHGYMLK…WLKELTCTFN (95 aa)).

This sequence belongs to the protein kinase superfamily. AGC Ser/Thr protein kinase family. GPRK subfamily. In terms of assembly, interacts with GIT1. Ubiquitinated. Expressed in brain cortex, hippocampus, striatum, hypothalamus, cerebellum and brainstem (at protein level).

It localises to the postsynapse. It is found in the presynapse. It catalyses the reaction [beta-adrenergic receptor] + ATP = [beta-adrenergic receptor]-phosphate + ADP + H(+). Specifically phosphorylates the agonist-occupied form of the beta-adrenergic and closely related receptors. The polypeptide is G protein-coupled receptor kinase 3 (Rattus norvegicus (Rat)).